Here is a 347-residue protein sequence, read N- to C-terminus: MLKSEFHYDLPQNLIAQSPLPERSASRLLCLDGATGALEDKSFRDIEKLLRPGDLLVFNDTRVLPARLFGRKETGGAVEILLERLLGERLMLAHVRASKAPRPGTWLALEAEHRVRVVERDGDLFLLELAGEEPLQTVLEQIGHMPLPPYITRPDTSADLERYQTVYATRPGAVAAPTAGLHFDTELLGRLRGAGIDMARVTLHVGAGTFQPVRTENLEDHRMHAEYCEVGPEVVKAVERARGRGGRVVAVGTTSMRSLETAASGGSLRTFSGETRLFIKPGFRFNCVDALVTNFHLPESTLLVLVCAFAGHRETLAAYRHAIAQAYRFFSYGDAMFVTPNEPAANR.

It belongs to the QueA family. Monomer.

The protein resides in the cytoplasm. The catalysed reaction is 7-aminomethyl-7-carbaguanosine(34) in tRNA + S-adenosyl-L-methionine = epoxyqueuosine(34) in tRNA + adenine + L-methionine + 2 H(+). It participates in tRNA modification; tRNA-queuosine biosynthesis. Transfers and isomerizes the ribose moiety from AdoMet to the 7-aminomethyl group of 7-deazaguanine (preQ1-tRNA) to give epoxyqueuosine (oQ-tRNA). The chain is S-adenosylmethionine:tRNA ribosyltransferase-isomerase from Methylococcus capsulatus (strain ATCC 33009 / NCIMB 11132 / Bath).